A 421-amino-acid polypeptide reads, in one-letter code: MTESVLDYMSRLGRDARAASRLLARAATAQKNRALLAAADALDAARAELSHANEQDLAAGRANGLEPAMLDRLALTPARIDDMIEGLRQVATLPDPIGEIRDMRYVPSGIQIGKMRVPLGVVGIIYESRPNVTIDAASLCLKSGNATILRGGSEAIHSNQAIARCIQQGLAEAGLPAAAVQVVETTDRAAVGALISMPEYVDVIVPRGGKGLIERISREAKVPVIKHLDGICHVYIDVAADLDKAIRVADNAKTQRYAPCNTMETLLVHAGIAERALPPLATIYREKGVELRGDAATRALLGADVLEATEEDWRTEYNAPILSIRIVDGLDAAIEHINTYGSQHTDAIITENFSDARRFLAEVDSASVMVNASTRFADGFEYGLGAEIGISTDKLHARGPVGLEGLTSEKYVVFGDGHVRT.

The protein belongs to the gamma-glutamyl phosphate reductase family.

It is found in the cytoplasm. It catalyses the reaction L-glutamate 5-semialdehyde + phosphate + NADP(+) = L-glutamyl 5-phosphate + NADPH + H(+). Its pathway is amino-acid biosynthesis; L-proline biosynthesis; L-glutamate 5-semialdehyde from L-glutamate: step 2/2. Its function is as follows. Catalyzes the NADPH-dependent reduction of L-glutamate 5-phosphate into L-glutamate 5-semialdehyde and phosphate. The product spontaneously undergoes cyclization to form 1-pyrroline-5-carboxylate. This is Gamma-glutamyl phosphate reductase from Pseudomonas aeruginosa (strain UCBPP-PA14).